A 454-amino-acid chain; its full sequence is Chromosomal replication initiator protein DnaA (454 aa).

The tract at residues M1–V71 is domain I, interacts with DnaA modulators. Residues V71–A112 are domain II. Positions V82–T108 are disordered. Low complexity predominate over residues A84 to A99. Positions P113–A334 are domain III, AAA+ region. Positions 157, 159, 160, and 161 each coordinate ATP. The tract at residues S335–E454 is domain IV, binds dsDNA.

Belongs to the DnaA family. In terms of assembly, oligomerizes as a right-handed, spiral filament on DNA at oriC.

It is found in the cytoplasm. Its function is as follows. Plays an essential role in the initiation and regulation of chromosomal replication. ATP-DnaA binds to the origin of replication (oriC) to initiate formation of the DNA replication initiation complex once per cell cycle. Binds the DnaA box (a 9 base pair repeat at the origin) and separates the double-stranded (ds)DNA. Forms a right-handed helical filament on oriC DNA; dsDNA binds to the exterior of the filament while single-stranded (ss)DNA is stabiized in the filament's interior. The ATP-DnaA-oriC complex binds and stabilizes one strand of the AT-rich DNA unwinding element (DUE), permitting loading of DNA polymerase. After initiation quickly degrades to an ADP-DnaA complex that is not apt for DNA replication. Binds acidic phospholipids. This chain is Chromosomal replication initiator protein DnaA, found in Roseobacter denitrificans (strain ATCC 33942 / OCh 114) (Erythrobacter sp. (strain OCh 114)).